The primary structure comprises 389 residues: Glutamate 5-kinase (389 aa).

Residue K17 participates in ATP binding. Positions 57, 144, and 156 each coordinate substrate. S176–D177 is an ATP binding site. The 78-residue stretch at A282–V359 folds into the PUA domain.

The protein belongs to the glutamate 5-kinase family.

The protein resides in the cytoplasm. The enzyme catalyses L-glutamate + ATP = L-glutamyl 5-phosphate + ADP. Its pathway is amino-acid biosynthesis; L-proline biosynthesis; L-glutamate 5-semialdehyde from L-glutamate: step 1/2. Its function is as follows. Catalyzes the transfer of a phosphate group to glutamate to form L-glutamate 5-phosphate. The polypeptide is Glutamate 5-kinase (Agrobacterium fabrum (strain C58 / ATCC 33970) (Agrobacterium tumefaciens (strain C58))).